The sequence spans 215 residues: MTDHNEAKKVLLSPFISNNPIMLQVLGICSALAVTSKMETAFVMALAVTVVTGFSNLFISLIRHIIPNSVRIIVQMTIIASLVIVVDQLLKAFSYELSKQLSVFVGLIITNCIVMGRAEAYAMKSPPWLSFLDGIGNGLGYGFILLLVGTIREVIGSGSWFGITLFETVNNGGWYIPNGMLLMPPSAFFLIGLFIWVLRTLRPEQQEPTEHGHKE.

Transmembrane regions (helical) follow at residues P14 to V34, F42 to I62, I72 to A92, V103 to M123, F131 to I151, and N178 to L198.

It belongs to the NqrDE/RnfAE family. As to quaternary structure, composed of six subunits; NqrA, NqrB, NqrC, NqrD, NqrE and NqrF.

Its subcellular location is the cell inner membrane. It catalyses the reaction a ubiquinone + n Na(+)(in) + NADH + H(+) = a ubiquinol + n Na(+)(out) + NAD(+). Functionally, NQR complex catalyzes the reduction of ubiquinone-1 to ubiquinol by two successive reactions, coupled with the transport of Na(+) ions from the cytoplasm to the periplasm. NqrA to NqrE are probably involved in the second step, the conversion of ubisemiquinone to ubiquinol. This Tolumonas auensis (strain DSM 9187 / NBRC 110442 / TA 4) protein is Na(+)-translocating NADH-quinone reductase subunit D.